A 266-amino-acid polypeptide reads, in one-letter code: Protein-ADP-ribose hydrolase (266 aa).

In terms of domain architecture, Macro spans 74-265 (TDLKDLKPIK…LYKEAFNRDA (192 aa)). Residues aspartate 93, isoleucine 94, and asparagine 107 each coordinate ADP-D-ribose. The Zn(2+) site is built by cysteine 113, histidine 118, and cysteine 120. Residues cysteine 120, isoleucine 121, aspartate 122, serine 212, threonine 213, glycine 214, and phenylalanine 216 each contribute to the ADP-D-ribose site.

Belongs to the MacroD-type family. Zn-Macro subfamily. Zn(2+) is required as a cofactor.

It carries out the reaction 4-O-(ADP-D-ribosyl)-L-aspartyl-[protein] + H2O = L-aspartyl-[protein] + ADP-D-ribose + H(+). In terms of biological role, ADP-ribosylhydrolase that specifically reverses the SirTM-mediated mono-ADP-ribosylation at an asparatate residue of GcvH-L, by releasing ADP-ribose from the target protein. May play a role in the regulation of the response to host-induced oxidative stress. The sequence is that of Protein-ADP-ribose hydrolase from Staphylococcus aureus (strain MRSA252).